A 578-amino-acid chain; its full sequence is Transmembrane protein 121B (578 aa).

2 disordered regions span residues 1–84 (MRPA…ESLS) and 106–129 (AGPA…PTSS). 2 stretches are compositionally biased toward low complexity: residues 8-17 (PRSVSSASGS) and 44-53 (GDSSTSTSTS). Positions 54-67 (RGGGGGRRGGGGGS) are enriched in gly residues. Ser-167 is modified (phosphoserine). The tract at residues 529-557 (RARGGYGAPPSAPPPPPPPPQGGSQLGHC) is disordered. The span at 538 to 549 (PSAPPPPPPPPQ) shows a compositional bias: pro residues. Ser-552 carries the phosphoserine modification.

It belongs to the TMEM121 family. In terms of tissue distribution, widely expressed, especially in adult heart, brain, prostate, testes, peripherical blood leukocytes and fetal brain.

The sequence is that of Transmembrane protein 121B from Homo sapiens (Human).